The following is an 82-amino-acid chain: Small ribosomal subunit protein bS18 (82 aa).

This sequence belongs to the bacterial ribosomal protein bS18 family. In terms of assembly, part of the 30S ribosomal subunit. Forms a tight heterodimer with protein bS6.

In terms of biological role, binds as a heterodimer with protein bS6 to the central domain of the 16S rRNA, where it helps stabilize the platform of the 30S subunit. This chain is Small ribosomal subunit protein bS18, found in Chlamydia caviae (strain ATCC VR-813 / DSM 19441 / 03DC25 / GPIC) (Chlamydophila caviae).